Reading from the N-terminus, the 300-residue chain is MDLENNNNTPLTGKQAEKCAKKRKCVITLDEKQVESKRLKKEESNVEATSRPPAQSPKKRLHLNGKPMQNKDLNFKYGNYKHYYGKRILNKDFHDIRLDVLGTQPDLFRNKQLLDIGCNSGHLSIQIARKFEVKSLVGLDIDRGLINDAQKTVSHLKRHATPGQGIPHIQFVHGNYVLEDDVLLEIERPQFDVILCLSVTKWIHLNFCDSGLKQAFRRMYLQLRPGGKLILEPQSFDGYKRRKKLSEQIRDNYNAIKFRPDHFTEYLLSPEVGFAEMKLMGIPEHCKVGFKRPIQIFTKS.

Residues 1-12 show a composition bias toward polar residues; the sequence is MDLENNNNTPLT. Disordered regions lie at residues 1-21 and 34-68; these read MDLE…KCAK and VESK…GKPM. Residues 34 to 44 are compositionally biased toward basic and acidic residues; sequence VESKRLKKEES. A Bin3-type SAM domain is found at 95 to 300; the sequence is DIRLDVLGTQ…KRPIQIFTKS (206 aa). The S-adenosyl-L-methionine site is built by N119 and D140.

It belongs to the methyltransferase superfamily.

It localises to the nucleus. Functionally, probable S-adenosyl-L-methionine-dependent methyltransferase that binds and stabilizes U6 snRNA, probably by adding a methylphosphate cap at its 5'-end. Required for U6 stability, but not stability of 7SK snRNAs, other miRNAs or tRNAs. U6 stabilization is required for efficient pre-mRNA splicing. Essential for organismal and germline development. This Drosophila melanogaster (Fruit fly) protein is U6 snRNA methylphosphate capping enzyme Amus.